The following is a 141-amino-acid chain: Cystatin-S (141 aa).

Positions 1 to 20 are cleaved as a signal peptide; sequence MARPLCTLLLLMATLAGALA. Phosphoserine is present on residues serine 21 and serine 23. Positions 76-80 match the Secondary area of contact motif; the sequence is QTFGG. Cystine bridges form between cysteine 94–cysteine 104 and cysteine 118–cysteine 138.

It belongs to the cystatin family. Phosphorylated at both its N- and C-terminal regions. As to expression, expressed in submandibular and sublingual saliva but not in parotid saliva (at protein level). Expressed in saliva, tears, urine and seminal fluid.

It localises to the secreted. Functionally, this protein strongly inhibits papain and ficin, partially inhibits stem bromelain and bovine cathepsin C, but does not inhibit porcine cathepsin B or clostripain. Papain is inhibited non-competitively. The protein is Cystatin-S (CST4) of Homo sapiens (Human).